Reading from the N-terminus, the 477-residue chain is MIRRLQDNGDLIRAFPRVHFVGIGGAGMTGIAEVMLTLGYEVSGSDNADNVATRRLATLGARVMRGHSAANVLGTDCVVVSSAIREDNPELMEARSQRIPIMPRAAMLAELMRFRHGIAVAGTHGKTTTTSLIAAVLSEGGLDPTFVIGGQLLAAGANAKLGAGQWLVVEADESDGSFLRLNPLVAVVTNIDADHLENYGNDFSRIKDAFTEFLQRLPFYGLALLCLDDPEVAELAGKARRHVMTYGIDAAADVRAEDVVQDGARMYFTLCLPEGKVIPVTLALPGRHNVLNALAASAVGWQLGVPPEVIGRALKSFVGIGRRFNDLGDVAIGNGACVRLIDDYGHHPRELEAVFAAARGGWPDKRLVVAFQPHRYSRTRDQFDAFAAVLSSVDALVLSEVYPAGEVPIPGADAKALARAIRARGRSEPVVVGQVASLIEVLPDVLQEGDLLLMMGAGDIGSIAQRIVHDGFVFGEV.

Residue 122–128 (GTHGKTT) participates in ATP binding.

It belongs to the MurCDEF family.

It is found in the cytoplasm. It catalyses the reaction UDP-N-acetyl-alpha-D-muramate + L-alanine + ATP = UDP-N-acetyl-alpha-D-muramoyl-L-alanine + ADP + phosphate + H(+). Its pathway is cell wall biogenesis; peptidoglycan biosynthesis. Cell wall formation. The sequence is that of UDP-N-acetylmuramate--L-alanine ligase from Xylella fastidiosa (strain M12).